Here is a 452-residue protein sequence, read N- to C-terminus: Translation initiation factor eIF2B subunit gamma (452 aa).

M1 is subject to N-acetylmethionine. S260 bears the Phosphoserine mark.

Belongs to the eIF-2B gamma/epsilon subunits family. Component of the translation initiation factor 2B (eIF2B) complex which is a heterodecamer of two sets of five different subunits: alpha, beta, gamma, delta and epsilon. Subunits alpha, beta and delta comprise a regulatory subcomplex and subunits epsilon and gamma comprise a catalytic subcomplex. Within the complex, the hexameric regulatory complex resides at the center, with the two heterodimeric catalytic subcomplexes bound on opposite sides.

Its subcellular location is the cytoplasm. It is found in the cytosol. Its activity is regulated as follows. Activated by the chemical integrated stress response (ISR) inhibitor ISRIB which stimulates guanine nucleotide exchange factor activity for both phosphorylated and unphosphorylated eIF2. Its function is as follows. Acts as a component of the translation initiation factor 2B (eIF2B) complex, which catalyzes the exchange of GDP for GTP on the eukaryotic initiation factor 2 (eIF2) complex gamma subunit. Its guanine nucleotide exchange factor activity is repressed when bound to eIF2 complex phosphorylated on the alpha subunit, thereby limiting the amount of methionyl-initiator methionine tRNA available to the ribosome and consequently global translation is repressed. This chain is Translation initiation factor eIF2B subunit gamma (EIF2B3), found in Homo sapiens (Human).